Here is an 844-residue protein sequence, read N- to C-terminus: Translation initiation factor IF-2 (844 aa).

Residues 1 to 11 show a composition bias toward basic and acidic residues; sequence MTEDVKADAPK. Disordered stretches follow at residues 1 to 48 and 79 to 249; these read MTED…VKTD and RLEA…GTAL. Positions 21 to 30 are enriched in low complexity; sequence TTVSSTTTGG. The span at 79–161 shows a compositional bias: basic and acidic residues; sequence RLEAEKAATK…AAEEAKRYAE (83 aa). A compositionally biased stretch (acidic residues) spans 162–175; that stretch reads ADDSDNESSSEDYS. Basic residues predominate over residues 200–210; it reads RGKNKVAKAKK. The span at 211-237 shows a compositional bias: basic and acidic residues; sequence GGRDDENSKNSKNERESNRKNQKDAKF. Residues 343 to 513 enclose the tr-type G domain; sequence TRAPVVTIMG…LLQSEVLELT (171 aa). Positions 352 to 359 are G1; the sequence is GHVDHGKT. Position 352–359 (352–359) interacts with GTP; that stretch reads GHVDHGKT. The G2 stretch occupies residues 377–381; the sequence is GITQH. The G3 stretch occupies residues 399–402; it reads DTPG. GTP-binding positions include 399–403 and 453–456; these read DTPGH and NKID. Residues 453–456 are G4; sequence NKID. The G5 stretch occupies residues 489 to 491; it reads SAK.

The protein belongs to the TRAFAC class translation factor GTPase superfamily. Classic translation factor GTPase family. IF-2 subfamily.

The protein resides in the cytoplasm. One of the essential components for the initiation of protein synthesis. Protects formylmethionyl-tRNA from spontaneous hydrolysis and promotes its binding to the 30S ribosomal subunits. Also involved in the hydrolysis of GTP during the formation of the 70S ribosomal complex. The chain is Translation initiation factor IF-2 from Haemophilus influenzae (strain 86-028NP).